A 23-amino-acid chain; its full sequence is Superoxide dismutase [Mn], mitochondrial (23 aa).

Belongs to the iron/manganese superoxide dismutase family. In terms of assembly, homotetramer. The cofactor is Mn(2+).

Its subcellular location is the mitochondrion matrix. It catalyses the reaction 2 superoxide + 2 H(+) = H2O2 + O2. Its function is as follows. Destroys superoxide anion radicals which are normally produced within the cells and which are toxic to biological systems. This Aquarana catesbeiana (American bullfrog) protein is Superoxide dismutase [Mn], mitochondrial.